The sequence spans 74 residues: uncharacterized protein (74 aa).

The tract at residues 55 to 74 is disordered; that stretch reads DENSESESKDGASWFKVYRG.

This is an uncharacterized protein from Listeria innocua serovar 6a (strain ATCC BAA-680 / CLIP 11262).